Consider the following 200-residue polypeptide: Oligoribonuclease (200 aa).

The region spanning 20-183 (LVWLDMEMTG…ADIHESIDEL (164 aa)) is the Exonuclease domain. Tyrosine 141 is a catalytic residue.

This sequence belongs to the oligoribonuclease family.

Its subcellular location is the cytoplasm. Functionally, 3'-to-5' exoribonuclease specific for small oligoribonucleotides. The chain is Oligoribonuclease from Burkholderia vietnamiensis (strain G4 / LMG 22486) (Burkholderia cepacia (strain R1808)).